The following is a 395-amino-acid chain: Bifunctional fatty acid conjugase/Delta(12)-oleate desaturase (395 aa).

Helical transmembrane passes span 73–93 (FALA…LPKP) and 97–117 (MAWP…WVIA). The Histidine box-1 signature appears at 118–122 (HECGH). A helical transmembrane segment spans residues 130 to 150 (WVNDAVGFFLHTSLLVPYFPF). The short motif at 154-158 (HRRHH) is the Histidine box-2 element. The next 3 membrane-spanning stretches (helical) occupy residues 192 to 212 (VLTL…FNAS), 236 to 256 (FWVH…YRLA), and 264 to 284 (LLSI…LITF). A Histidine box-3 motif is present at residues 328–332 (HVIHH).

Belongs to the fatty acid desaturase type 1 family.

The protein localises to the membrane. The catalysed reaction is a (9Z,12Z)-octadecadienoyl-containing glycerolipid + 2 Fe(II)-[cytochrome b5] + O2 + 2 H(+) = a (9Z,11E,13Z)-octadeca-9,11,13-trienoyl-containing glycerolipid + 2 Fe(III)-[cytochrome b5] + 2 H2O. Its pathway is lipid metabolism; polyunsaturated fatty acid biosynthesis. In terms of biological role, converts a single cis double bond at position 12 of linoleate incorporated into phosphatidylcholine into conjugated 11-trans and 13-cis double bonds. Produces punicic acid (18:3(9Z,11E,13Z)) from linoleic acid and conjugated octadecatetraenoic fatty acid from gamma-linolenic acid. No activity with cis- and trans-vaccenic acid, alpha-linolenic acid or homo-gamma-linolenic acid. 16:2(9Z,12Z), 18:3(9Z,12Z,15Z) and 18:2(9Z,12Z) are substrates for the conjugase to form trans-Delta(11) and cis-Delta(13) double bonds. No activity on the cis-Delta(9) double bonds of oleic and palmitoleic acids. The polypeptide is Bifunctional fatty acid conjugase/Delta(12)-oleate desaturase (Punica granatum (Pomegranate)).